Consider the following 540-residue polypeptide: Chaperonin GroEL (540 aa).

Residues 29 to 32 (TLGP), 86 to 90 (DGTTT), Gly-413, 476 to 478 (NAA), and Asp-492 each bind ATP.

Belongs to the chaperonin (HSP60) family. As to quaternary structure, forms a cylinder of 14 subunits composed of two heptameric rings stacked back-to-back. Interacts with the co-chaperonin GroES.

The protein localises to the cytoplasm. It catalyses the reaction ATP + H2O + a folded polypeptide = ADP + phosphate + an unfolded polypeptide.. Together with its co-chaperonin GroES, plays an essential role in assisting protein folding. The GroEL-GroES system forms a nano-cage that allows encapsulation of the non-native substrate proteins and provides a physical environment optimized to promote and accelerate protein folding. The chain is Chaperonin GroEL from Streptococcus pneumoniae (strain Hungary19A-6).